The primary structure comprises 106 residues: Immunity protein CdiI (106 aa).

In terms of assembly, forms a contact-dependent growth inhibition complex of CdiA-CT-NC101, CdiI-NC101 and EF-Tu; the complex is a dimer of heterotrimers.

Functionally, immunity protein component of a toxin-immunity protein module, which functions as a cellular contact-dependent growth inhibition (CDI) system. CDI modules allow bacteria to communicate with and inhibit the growth of closely related neighboring bacteria in a contact-dependent fashion. Neutralizes the toxic activity of cognate toxin CdiA-NC101 (the C-terminal 154 residue CT fragment). Does not inhibit toxic activity of CdiA from other toxin-immunity modules or strains of E.coli. Mediates dimerization of the ternary CdiA-CT-NC101, CdiI-NC101 and EF-Tu complex; both CdiI molecules contact both EF-Tu molecules. The chain is Immunity protein CdiI from Escherichia coli (strain NC101).